Reading from the N-terminus, the 577-residue chain is BAG family molecular chaperone regulator 3 (577 aa).

A compositionally biased stretch (polar residues) spans 1 to 17 (MSAATQSPMMQMASGNG). 3 disordered regions span residues 1–81 (MSAA…LLPI), 126–207 (TEAA…SHQL), and 229–427 (PSFH…HPGV). S2 is modified (N-acetylserine). 2 WW domains span residues 22-56 (DPLP…DPRV) and 126-157 (TEAA…CGQM). Position 138 is a phosphoserine (S138). R141 bears the Omega-N-methylarginine mark. A compositionally biased stretch (low complexity) spans 158–204 (PATATTAAAQPPTAHGPERSQSPAASDCSSSSSSASLPSSGRSSLGS). A phosphoserine mark is found at S179 and S204. Residues 256–265 (IQGDDWEPRP) are compositionally biased toward basic and acidic residues. Omega-N-methylarginine is present on R267. A phosphoserine mark is found at S280, S281, and S285. A Phosphothreonine modification is found at T291. The residue at position 297 (S297) is a Phosphoserine. Pro residues-rich tracts occupy residues 332 to 341 (PAGPDLPPGH) and 376 to 392 (IPCP…PSPP). Residues S380, S382, and S390 each carry the phosphoserine modification. One can recognise a BAG domain in the interval 426-503 (GVLKVEAILE…TILEKLEQKA (78 aa)). A Glycyl lysine isopeptide (Lys-Gly) (interchain with G-Cter in SUMO1); alternate cross-link involves residue K450. K450 is covalently cross-linked (Glycyl lysine isopeptide (Lys-Gly) (interchain with G-Cter in SUMO2); alternate). Residues 524–577 (QPLQEIMGAVVADKDKKGPENKDPQTESQQLEAKAATPPNPSNPADSAGNLVAP) are disordered. The segment covering 535–548 (ADKDKKGPENKDPQ) has biased composition (basic and acidic residues).

In terms of assembly, forms a ternary complex with HSPA1A/HSP70 and HSPB8, serving as scaffold subunit. Component of the chaperone-assisted selective autophagy (CASA) complex consisting of BAG3, HSPA8/HSC70, HSPB8 and STUB1/CHIP. Binds to the ATPase domain of HSP70 chaperones. Interacts with BCL2. Interacts with phospholipase C-gamma proteins. Interacts with DNAJB1 and DNAJB6. Interacts (via BAG domain) with HSF1; this interaction occurs in normal and heat-shocked cells. Interacts with HSPA8/HSC70 (via NBD), HSPA1A (via NBD) and HSPA1B (via NBD). Interacts (via WW domain 1) with SYNPO2 (via PPPY motif). Interacts with HSPB8.

It localises to the nucleus. It is found in the cytoplasm. In terms of biological role, co-chaperone and adapter protein that connects different classes of molecular chaperones including heat shock proteins 70 (HSP70s), e.g. HSPA1A/HSP70 or HSPA8/HSC70, and small heat shock proteins (sHSPs), e.g. HSPB8. Acts as a nucleotide-exchange factor (NEF) promoting the release of ADP from HSP70s, thereby triggering client protein release. Nucleotide release is mediated via BAG3 binding to the nucleotide-binding domain (NBD) of HSP70s, whereas client release is mediated via its binding to the substrate-binding domain (SBD). Has anti-apoptotic activity. Plays a role in the HSF1 nucleocytoplasmic transport. The sequence is that of BAG family molecular chaperone regulator 3 (Bag3) from Mus musculus (Mouse).